The primary structure comprises 282 residues: Inositol oxygenase (282 aa).

Residues 1 to 25 (MKDPDPSQVYRPDMDPEAAKDKGSF) are disordered. Residues 12–24 (PDMDPEAAKDKGS) are compositionally biased toward basic and acidic residues. Arg-26 serves as a coordination point for substrate. A Phosphoserine modification is found at Ser-30. Substrate is bound at residue 82 to 84 (DES). Residues His-95, His-120, and Asp-121 each contribute to the Fe cation site. Substrate contacts are provided by residues Lys-124 and 138 to 139 (GD). His-191, His-217, and Asp-250 together coordinate Fe cation. Residue 217–218 (HS) coordinates substrate.

Belongs to the myo-inositol oxygenase family. Fe cation serves as cofactor. Post-translationally, the N-terminus is blocked. Kidney specific.

The protein localises to the cytoplasm. It catalyses the reaction myo-inositol + O2 = D-glucuronate + H2O + H(+). The protein operates within polyol metabolism; myo-inositol degradation into D-glucuronate; D-glucuronate from myo-inositol: step 1/1. The chain is Inositol oxygenase (MIOX) from Sus scrofa (Pig).